Here is an 853-residue protein sequence, read N- to C-terminus: DNA mismatch repair protein MutS (853 aa).

614-621 (GPNMGGKS) is a binding site for ATP.

This sequence belongs to the DNA mismatch repair MutS family.

In terms of biological role, this protein is involved in the repair of mismatches in DNA. It is possible that it carries out the mismatch recognition step. This protein has a weak ATPase activity. The chain is DNA mismatch repair protein MutS from Shigella boydii serotype 18 (strain CDC 3083-94 / BS512).